The chain runs to 243 residues: Ubiquinone/menaquinone biosynthesis C-methyltransferase UbiE (243 aa).

Residues T69, D90, and 116 to 117 (DA) each bind S-adenosyl-L-methionine.

This sequence belongs to the class I-like SAM-binding methyltransferase superfamily. MenG/UbiE family.

The enzyme catalyses a 2-demethylmenaquinol + S-adenosyl-L-methionine = a menaquinol + S-adenosyl-L-homocysteine + H(+). It catalyses the reaction a 2-methoxy-6-(all-trans-polyprenyl)benzene-1,4-diol + S-adenosyl-L-methionine = a 5-methoxy-2-methyl-3-(all-trans-polyprenyl)benzene-1,4-diol + S-adenosyl-L-homocysteine + H(+). Its pathway is quinol/quinone metabolism; menaquinone biosynthesis; menaquinol from 1,4-dihydroxy-2-naphthoate: step 2/2. It functions in the pathway cofactor biosynthesis; ubiquinone biosynthesis. Its function is as follows. Methyltransferase required for the conversion of demethylmenaquinol (DMKH2) to menaquinol (MKH2) and the conversion of 2-polyprenyl-6-methoxy-1,4-benzoquinol (DDMQH2) to 2-polyprenyl-3-methyl-6-methoxy-1,4-benzoquinol (DMQH2). The polypeptide is Ubiquinone/menaquinone biosynthesis C-methyltransferase UbiE (Cupriavidus taiwanensis (strain DSM 17343 / BCRC 17206 / CCUG 44338 / CIP 107171 / LMG 19424 / R1) (Ralstonia taiwanensis (strain LMG 19424))).